Here is a 416-residue protein sequence, read N- to C-terminus: Gamma-glutamyl phosphate reductase (416 aa).

The protein belongs to the gamma-glutamyl phosphate reductase family.

It localises to the cytoplasm. It catalyses the reaction L-glutamate 5-semialdehyde + phosphate + NADP(+) = L-glutamyl 5-phosphate + NADPH + H(+). It participates in amino-acid biosynthesis; L-proline biosynthesis; L-glutamate 5-semialdehyde from L-glutamate: step 2/2. Functionally, catalyzes the NADPH-dependent reduction of L-glutamate 5-phosphate into L-glutamate 5-semialdehyde and phosphate. The product spontaneously undergoes cyclization to form 1-pyrroline-5-carboxylate. This chain is Gamma-glutamyl phosphate reductase, found in Petrotoga mobilis (strain DSM 10674 / SJ95).